The sequence spans 92 residues: Small ribosomal subunit protein uS19 (92 aa).

The protein belongs to the universal ribosomal protein uS19 family.

Protein S19 forms a complex with S13 that binds strongly to the 16S ribosomal RNA. This chain is Small ribosomal subunit protein uS19, found in Corynebacterium urealyticum (strain ATCC 43042 / DSM 7109).